We begin with the raw amino-acid sequence, 89 residues long: uncharacterized protein (89 aa).

This is an uncharacterized protein from Sinorhizobium fredii (strain NBRC 101917 / NGR234).